We begin with the raw amino-acid sequence, 301 residues long: Protein FdhE homolog (301 aa).

It belongs to the FdhE family.

It localises to the cytoplasm. Necessary for formate dehydrogenase activity. The protein is Protein FdhE homolog of Shewanella baltica (strain OS223).